We begin with the raw amino-acid sequence, 341 residues long: tRNA N6-adenosine threonylcarbamoyltransferase (341 aa).

Fe cation contacts are provided by His-112 and His-116. Substrate-binding positions include 138-142 (TVSGG), Asp-171, Gly-184, Asp-188, and Asn-279. A Fe cation-binding site is contributed by Asp-307.

Belongs to the KAE1 / TsaD family. Fe(2+) is required as a cofactor.

The protein localises to the cytoplasm. The enzyme catalyses L-threonylcarbamoyladenylate + adenosine(37) in tRNA = N(6)-L-threonylcarbamoyladenosine(37) in tRNA + AMP + H(+). Its function is as follows. Required for the formation of a threonylcarbamoyl group on adenosine at position 37 (t(6)A37) in tRNAs that read codons beginning with adenine. Is involved in the transfer of the threonylcarbamoyl moiety of threonylcarbamoyl-AMP (TC-AMP) to the N6 group of A37, together with TsaE and TsaB. TsaD likely plays a direct catalytic role in this reaction. The chain is tRNA N6-adenosine threonylcarbamoyltransferase from Riemerella anatipestifer (Moraxella anatipestifer).